Reading from the N-terminus, the 195-residue chain is Peptide deformylase (195 aa).

Residues C102 and H144 each contribute to the Fe cation site. The active site involves E145. Residue H148 coordinates Fe cation.

Belongs to the polypeptide deformylase family. Fe(2+) is required as a cofactor.

The enzyme catalyses N-terminal N-formyl-L-methionyl-[peptide] + H2O = N-terminal L-methionyl-[peptide] + formate. Functionally, removes the formyl group from the N-terminal Met of newly synthesized proteins. Requires at least a dipeptide for an efficient rate of reaction. N-terminal L-methionine is a prerequisite for activity but the enzyme has broad specificity at other positions. The protein is Peptide deformylase of Salinibacter ruber (strain DSM 13855 / M31).